The chain runs to 191 residues: Protein GrpE (191 aa).

Positions 1–10 (MNHEEQKVEA) are enriched in basic and acidic residues. The tract at residues 1-28 (MNHEEQKVEAMEQVEAQPVEPTDVDSEV) is disordered.

It belongs to the GrpE family. Homodimer.

It localises to the cytoplasm. Functionally, participates actively in the response to hyperosmotic and heat shock by preventing the aggregation of stress-denatured proteins, in association with DnaK and GrpE. It is the nucleotide exchange factor for DnaK and may function as a thermosensor. Unfolded proteins bind initially to DnaJ; upon interaction with the DnaJ-bound protein, DnaK hydrolyzes its bound ATP, resulting in the formation of a stable complex. GrpE releases ADP from DnaK; ATP binding to DnaK triggers the release of the substrate protein, thus completing the reaction cycle. Several rounds of ATP-dependent interactions between DnaJ, DnaK and GrpE are required for fully efficient folding. The protein is Protein GrpE of Aeromonas hydrophila subsp. hydrophila (strain ATCC 7966 / DSM 30187 / BCRC 13018 / CCUG 14551 / JCM 1027 / KCTC 2358 / NCIMB 9240 / NCTC 8049).